The primary structure comprises 216 residues: Ribose-5-phosphate isomerase A (216 aa).

Substrate is bound by residues 26 to 29 (TGST), 79 to 82 (DGAD), and 92 to 95 (KGGG). Glu-101 functions as the Proton acceptor in the catalytic mechanism. Lys-119 contacts substrate.

This sequence belongs to the ribose 5-phosphate isomerase family. In terms of assembly, homodimer.

The enzyme catalyses aldehydo-D-ribose 5-phosphate = D-ribulose 5-phosphate. It functions in the pathway carbohydrate degradation; pentose phosphate pathway; D-ribose 5-phosphate from D-ribulose 5-phosphate (non-oxidative stage): step 1/1. Its function is as follows. Catalyzes the reversible conversion of ribose-5-phosphate to ribulose 5-phosphate. The protein is Ribose-5-phosphate isomerase A of Legionella pneumophila (strain Paris).